Consider the following 355-residue polypeptide: Peptide chain release factor 1 (355 aa).

An N5-methylglutamine modification is found at Gln-233.

It belongs to the prokaryotic/mitochondrial release factor family. Methylated by PrmC. Methylation increases the termination efficiency of RF1.

It localises to the cytoplasm. In terms of biological role, peptide chain release factor 1 directs the termination of translation in response to the peptide chain termination codons UAG and UAA. The protein is Peptide chain release factor 1 of Syntrophobacter fumaroxidans (strain DSM 10017 / MPOB).